A 340-amino-acid polypeptide reads, in one-letter code: DNA-directed RNA polymerase subunit alpha (340 aa).

The alpha N-terminal domain (alpha-NTD) stretch occupies residues 1 to 226 (MLIAQRPSLT…ELFGLARELN (226 aa)). Residues 243 to 340 (LAADLALPIE…DAGFVETEQY (98 aa)) are alpha C-terminal domain (alpha-CTD).

It belongs to the RNA polymerase alpha chain family. As to quaternary structure, homodimer. The RNAP catalytic core consists of 2 alpha, 1 beta, 1 beta' and 1 omega subunit. When a sigma factor is associated with the core the holoenzyme is formed, which can initiate transcription. In terms of processing, the last 19 amino acids in the C-terminal part are cleaved in the spore.

The enzyme catalyses RNA(n) + a ribonucleoside 5'-triphosphate = RNA(n+1) + diphosphate. DNA-dependent RNA polymerase catalyzes the transcription of DNA into RNA using the four ribonucleoside triphosphates as substrates. This chain is DNA-directed RNA polymerase subunit alpha, found in Streptomyces granaticolor.